Consider the following 133-residue polypeptide: Small ribosomal subunit protein uS8 (133 aa).

Belongs to the universal ribosomal protein uS8 family. Part of the 30S ribosomal subunit. Contacts proteins S5 and S12.

Its function is as follows. One of the primary rRNA binding proteins, it binds directly to 16S rRNA central domain where it helps coordinate assembly of the platform of the 30S subunit. The protein is Small ribosomal subunit protein uS8 of Chlamydia trachomatis serovar A (strain ATCC VR-571B / DSM 19440 / HAR-13).